The chain runs to 420 residues: Membrane protein UL43 homolog (420 aa).

11 helical membrane passes run 58–78, 81–101, 114–134, 157–177, 181–201, 203–223, 278–298, 312–332, 343–363, 364–384, and 399–419; these read IFSI…IQFI, KIIY…AFIV, IGKP…TLIT, LMCF…CLAT, LTWK…ISAP, GNIS…INVV, QIPM…VIAL, TDML…IFIP, IIIL…FGLV, LGPT…CINI, and VVKS…LVAL.

Belongs to the alphaherpesvirinae HHV-1 UL43 family.

It is found in the host membrane. In Gallus gallus (Chicken), this protein is Membrane protein UL43 homolog (MDV056).